The chain runs to 382 residues: Mannitol-1-phosphate 5-dehydrogenase (382 aa).

3 to 14 lines the NAD(+) pocket; it reads ALHFGAGNIGRG. K269 is subject to N6-acetyllysine.

It belongs to the mannitol dehydrogenase family.

It catalyses the reaction D-mannitol 1-phosphate + NAD(+) = beta-D-fructose 6-phosphate + NADH + H(+). In Shigella boydii serotype 18 (strain CDC 3083-94 / BS512), this protein is Mannitol-1-phosphate 5-dehydrogenase.